Consider the following 1417-residue polypeptide: DNA-directed RNA polymerase subunit beta' (1417 aa).

Positions 68, 70, 83, and 86 each coordinate Zn(2+). Residues Asp-458, Asp-460, and Asp-462 each coordinate Mg(2+). Cys-811, Cys-884, Cys-891, and Cys-894 together coordinate Zn(2+).

This sequence belongs to the RNA polymerase beta' chain family. As to quaternary structure, the RNAP catalytic core consists of 2 alpha, 1 beta, 1 beta' and 1 omega subunit. When a sigma factor is associated with the core the holoenzyme is formed, which can initiate transcription. Mg(2+) is required as a cofactor. Requires Zn(2+) as cofactor.

It catalyses the reaction RNA(n) + a ribonucleoside 5'-triphosphate = RNA(n+1) + diphosphate. Its function is as follows. DNA-dependent RNA polymerase catalyzes the transcription of DNA into RNA using the four ribonucleoside triphosphates as substrates. The chain is DNA-directed RNA polymerase subunit beta' from Francisella tularensis subsp. tularensis (strain FSC 198).